We begin with the raw amino-acid sequence, 186 residues long: MEIKELIAKATANMEKAVEYLDEQLSHVRAGKASPKLLDGIMVMYYGNATPLTQVASINTPDAKTIVVTPWERSLIKDIEKAIMDSPLGITPENNGELIRLGLPPLTEERRRQLVKQTKGDAEDAKVSVRNARRDAIDAIKKSVKTDGTPEDVAKDAEAEMQKVHDRYIKKIDELFAEKEKEIMTV.

This sequence belongs to the RRF family.

It localises to the cytoplasm. Its function is as follows. Responsible for the release of ribosomes from messenger RNA at the termination of protein biosynthesis. May increase the efficiency of translation by recycling ribosomes from one round of translation to another. The polypeptide is Ribosome-recycling factor (Porphyromonas gingivalis (strain ATCC BAA-308 / W83)).